A 192-amino-acid chain; its full sequence is MNKIKMIVGLGNSVYKYNQTRHNVGFWYINMLSSFYKTSLKFKKKFSGYVSSFFLNNNKIFLLKPDLFMNLNGYSVFALSSFYKIKLSEILVVRDELDLSPGILKVKYGIGHNGHNGVKSIINTFEKKKPFIQLCIGIGRPEFKKNVSNFVLECPSKIDTINIKKAILKFIFLTKDYIYKKEFLKNKKIILI.

Tyr-17 contacts tRNA. Catalysis depends on His-22, which acts as the Proton acceptor. Residues Phe-68, Asn-70, and Asn-116 each coordinate tRNA.

Belongs to the PTH family. As to quaternary structure, monomer.

It localises to the cytoplasm. The catalysed reaction is an N-acyl-L-alpha-aminoacyl-tRNA + H2O = an N-acyl-L-amino acid + a tRNA + H(+). Its function is as follows. Hydrolyzes ribosome-free peptidyl-tRNAs (with 1 or more amino acids incorporated), which drop off the ribosome during protein synthesis, or as a result of ribosome stalling. Functionally, catalyzes the release of premature peptidyl moieties from peptidyl-tRNA molecules trapped in stalled 50S ribosomal subunits, and thus maintains levels of free tRNAs and 50S ribosomes. This chain is Peptidyl-tRNA hydrolase, found in Buchnera aphidicola subsp. Cinara cedri (strain Cc).